A 244-amino-acid chain; its full sequence is 6-carboxyhexanoate--CoA ligase (244 aa).

It belongs to the BioW family. As to quaternary structure, homodimer. Requires Mg(2+) as cofactor.

The enzyme catalyses heptanedioate + ATP + CoA = 6-carboxyhexanoyl-CoA + AMP + diphosphate. It participates in metabolic intermediate metabolism; pimeloyl-CoA biosynthesis; pimeloyl-CoA from pimelate: step 1/1. Catalyzes the transformation of pimelate into pimeloyl-CoA with concomitant hydrolysis of ATP to AMP. The protein is 6-carboxyhexanoate--CoA ligase of Methanococcus maripaludis (strain DSM 14266 / JCM 13030 / NBRC 101832 / S2 / LL).